Consider the following 442-residue polypeptide: D-galactonate dehydratase family member SSLG_02014 (442 aa).

Position 161 (His-161) interacts with substrate. Tyr-197 functions as the Proton donor/acceptor in the catalytic mechanism. Asp-246 contributes to the Mg(2+) binding site. His-248 acts as the Proton donor/acceptor in catalysis. Mg(2+)-binding residues include Glu-272 and Glu-298. Residues Glu-298, Arg-319, His-348, Asp-352, and Glu-375 each coordinate substrate.

It belongs to the mandelate racemase/muconate lactonizing enzyme family. GalD subfamily. It depends on Mg(2+) as a cofactor.

It carries out the reaction D-mannonate = 2-dehydro-3-deoxy-D-gluconate + H2O. Functionally, has low D-mannonate dehydratase activity (in vitro), suggesting that this is not a physiological substrate and that it has no significant role in D-mannonate degradation in vivo. Has no detectable activity with a panel of 70 other acid sugars (in vitro). In Streptomyces sp. (strain SPB78), this protein is D-galactonate dehydratase family member SSLG_02014.